The chain runs to 385 residues: Probable thioesterase PNKD (385 aa).

Polar residues predominate over residues 32-42 (KASQNRTRALQ). The interval 32-56 (KASQNRTRALQSHSSPECKEEPEPL) is disordered. Position 121 is a phosphoserine (Val-121). Residues His-172, His-174, Asp-176, His-177, His-229, Asp-253, and His-291 each contribute to the Zn(2+) site.

The protein belongs to the metallo-beta-lactamase superfamily. Glyoxalase II family. In terms of assembly, isoform 2 interacts with the sarcomeric proteins, MRLC2, MYOM1 and ENO3. The cofactor is Zn(2+). Undergoes cleavage at the N-terminus. Expressed in many discrete areas of the brain.

It is found in the cell membrane. It localises to the mitochondrion. Its subcellular location is the cytoplasm. It catalyses the reaction a thioester + H2O = a thiol + a carboxylate + H(+). Probable thioesterase that may play a role in cellular detoxification processes; it likely acts on a yet-unknown alpha-hydroxythioester substrate. In vitro, it is able to catalyze the hydrolysis of S-D-lactoyl-glutathione to form glutathione and D-lactic acid at very low rate, though this reaction is not physiologically relevant in vivo. The chain is Probable thioesterase PNKD (Pnkd) from Mus musculus (Mouse).